A 114-amino-acid polypeptide reads, in one-letter code: PDZK1-interacting protein 1 (114 aa).

Topologically, residues 1–28 (MSAFGLLILGLLTAVPPASCRQGLGNLQ) are extracellular. Residues 29-51 (PWMQGLIAVAVFLVLVAIAFAVN) form a helical membrane-spanning segment. At 52–114 (HFWCQEEPEP…EEGKVRSTPM (63 aa)) the chain is on the cytoplasmic side. Ser-85 bears the Phosphoserine mark. Residues 95–114 (HENAYENVPEEEGKVRSTPM) are disordered. Basic and acidic residues predominate over residues 105–114 (EEGKVRSTPM).

This sequence belongs to the PDZK1-interacting protein 1/SMIM24 family. In terms of assembly, forms a heterodimer (via N-terminal transmembrane helix) with SLC5A2/SGLT2 (via TM13); this interaction enhances SLC5A2 transporter activity. Interacts with PDZK1.

The protein localises to the apical cell membrane. Functionally, auxiliary protein of electrogenic Na(+)-coupled sugar symporter SLC5A2/SGLT2 and SLC5A1/SGLT1. Essential for the transporter activity of SLC5A2/SGLT2 but not SLC5A1/SGLT1. This chain is PDZK1-interacting protein 1, found in Pongo abelii (Sumatran orangutan).